The primary structure comprises 1153 residues: Stress response protein nst1 (1153 aa).

Disordered stretches follow at residues 1–212, 288–364, 421–467, and 507–941; these read MVPA…TSTQ, QGSF…DEET, ESLH…EQRM, and MEEE…TQRD. The span at 11–30 shows a compositional bias: low complexity; the sequence is SSSTMPNSSSTTAHSAPTTN. Positions 53 to 63 are enriched in basic residues; the sequence is NRKKQKRRQKQ. Positions 64–73 are enriched in low complexity; it reads AARLAERQLA. The span at 76-90 shows a compositional bias: polar residues; it reads HVSTDDATQNGSSHT. 2 stretches are compositionally biased toward basic and acidic residues: residues 91–109 and 116–128; these read NPERHHSDDGGADGPDHEQ and YPKDGQDSTEAHI. Positions 129–140 are enriched in polar residues; sequence DSQNPQGPNGTE. Residues 146–160 show a composition bias toward basic residues; it reads TGRKSKKKKGKKGRN. A compositionally biased stretch (low complexity) spans 169 to 182; the sequence is TSTPMSTPSVSMSH. Over residues 312–321 the composition is skewed to polar residues; sequence GQHTRTQGQF. Composition is skewed to acidic residues over residues 332 to 363 and 433 to 462; these read TEDDDLEENYDEEEDDGDEPYSDEELDEEDEE and DDEDYDDEEDEDYDSQEEEDYEEDEMDAMT. The stretch at 447–658 forms a coiled coil; the sequence is SQEEEDYEED…EQQAKKDTAK (212 aa). 2 stretches are compositionally biased toward basic and acidic residues: residues 507 to 526 and 536 to 674; these read MEEETRNEQRNAKKAREAQK and QAKE…DQAK. A compositionally biased stretch (low complexity) spans 721-739; that stretch reads RQPSQQDSHSSSPHSQAPS. A compositionally biased stretch (polar residues) spans 740–769; sequence TDPSQASLSPRSMPVSQSSGVASGNSQQGQ. Over residues 913–925 the composition is skewed to low complexity; that stretch reads PISRPSPIKRPSS. Residues 931-941 show a composition bias toward basic and acidic residues; the sequence is QKGDDRTTQRD.

The protein belongs to the NST1 family.

Its subcellular location is the cytoplasm. In terms of biological role, may act as a negative regulator of salt tolerance. The chain is Stress response protein nst1 (nst1) from Aspergillus fumigatus (strain ATCC MYA-4609 / CBS 101355 / FGSC A1100 / Af293) (Neosartorya fumigata).